The chain runs to 657 residues: 1-deoxy-D-xylulose-5-phosphate synthase (657 aa).

Histidine 73 contributes to the thiamine diphosphate binding site. Positions 91–110 (RQEGGMSGYPDRGESEHDIV) are disordered. Residues 101 to 110 (DRGESEHDIV) are compositionally biased toward basic and acidic residues. 113-115 (SHA) is a thiamine diphosphate binding site. Aspartate 145 provides a ligand contact to Mg(2+). Residues 146-147 (GA), asparagine 175, tyrosine 293, and glutamate 375 contribute to the thiamine diphosphate site. Asparagine 175 lines the Mg(2+) pocket.

It belongs to the transketolase family. DXPS subfamily. Homodimer. The cofactor is Mg(2+). Requires thiamine diphosphate as cofactor.

It catalyses the reaction D-glyceraldehyde 3-phosphate + pyruvate + H(+) = 1-deoxy-D-xylulose 5-phosphate + CO2. The protein operates within metabolic intermediate biosynthesis; 1-deoxy-D-xylulose 5-phosphate biosynthesis; 1-deoxy-D-xylulose 5-phosphate from D-glyceraldehyde 3-phosphate and pyruvate: step 1/1. Functionally, catalyzes the acyloin condensation reaction between C atoms 2 and 3 of pyruvate and glyceraldehyde 3-phosphate to yield 1-deoxy-D-xylulose-5-phosphate (DXP). This Arthrobacter sp. (strain FB24) protein is 1-deoxy-D-xylulose-5-phosphate synthase.